Here is a 149-residue protein sequence, read N- to C-terminus: Large ribosomal subunit protein bL9 (149 aa).

This sequence belongs to the bacterial ribosomal protein bL9 family.

Binds to the 23S rRNA. This is Large ribosomal subunit protein bL9 from Xanthomonas axonopodis pv. citri (strain 306).